The chain runs to 1037 residues: Probable inorganic carbon transporter subunit DabA 2 (1037 aa).

Zn(2+) is bound by residues C460, D462, H719, and C734.

Belongs to the inorganic carbon transporter (TC 9.A.2) DabA family. Forms a complex with DabB. Zn(2+) is required as a cofactor.

The protein resides in the cell inner membrane. Part of an energy-coupled inorganic carbon pump. The sequence is that of Probable inorganic carbon transporter subunit DabA 2 from Nitrobacter winogradskyi (strain ATCC 25391 / DSM 10237 / CIP 104748 / NCIMB 11846 / Nb-255).